A 274-amino-acid chain; its full sequence is Kit ligand (274 aa).

The signal sequence occupies residues 1–25; the sequence is MKKTQTWIITCIYLQLLLFNPLVKT. Residues 26–215 are Extracellular-facing; sequence KGICENRVTD…SNFTGDSNLQ (190 aa). Cystine bridges form between cysteine 29-cysteine 114 and cysteine 68-cysteine 164. 5 N-linked (GlcNAc...) asparagine glycosylation sites follow: asparagine 90, asparagine 97, asparagine 145, asparagine 196, and asparagine 207. A helical transmembrane segment spans residues 216-238; it reads WAAMALPAFFSLVIGFAFGALYW. The Cytoplasmic segment spans residues 239–274; it reads KKKQPNLTRAVENIQINEEDNEISMLQEKEREFQEV.

This sequence belongs to the SCF family. Homodimer, non-covalently linked. A soluble form is produced by proteolytic processing of the extracellular domain.

It localises to the cytoplasm. The protein resides in the cytoskeleton. It is found in the cell membrane. Its subcellular location is the cell projection. The protein localises to the lamellipodium. It localises to the filopodium. The protein resides in the secreted. In terms of biological role, stimulates the proliferation of mast cells. Able to augment the proliferation of both myeloid and lymphoid hematopoietic progenitors in bone marrow culture. Also mediates cell-cell adhesion. Acts synergistically with other cytokines, probably interleukins. This Equus caballus (Horse) protein is Kit ligand (KITLG).